Consider the following 351-residue polypeptide: AT-hook motif nuclear-localized protein 10 (351 aa).

Positions 1–151 (MSGSETGLMA…RPPGSSSKRL (151 aa)) are disordered. Residues 23–37 (HQQQQHSQAQPQQSQ) show a composition bias toward low complexity. Polar residues predominate over residues 60 to 77 (SPPQQYQPNSAGENSVLN). The Bipartite nuclear localization signal signature appears at 97 to 105 (KKRRGRPRK). 2 consecutive DNA-binding regions (a.T hook) follow at residues 97–109 (KKRRGRPRKYGPD) and 138–149 (KKRGRPPGSSSK). Residues 159–301 (TGIGFTPHVL…QMGLSSPVLP (143 aa)) form the PPC domain. 2 stretches are compositionally biased toward polar residues: residues 310-325 (MTPSSPQSRGTMSESS) and 334-351 (IHQSTGGPYNNTINMPWK). The disordered stretch occupies residues 310–351 (MTPSSPQSRGTMSESSCGGGHGSPIHQSTGGPYNNTINMPWK).

Its subcellular location is the nucleus. Its function is as follows. Transcription factor that specifically binds AT-rich DNA sequences related to the nuclear matrix attachment regions (MARs). The protein is AT-hook motif nuclear-localized protein 10 of Arabidopsis thaliana (Mouse-ear cress).